Reading from the N-terminus, the 366-residue chain is MNKVVLLCRPGFEKECAAEITDKAGQREIFGFARVKENAGYVIYECYQPDDGDKLIRELPFSSLIFARQWFVVGELLQHLPPEDRITPIVGMLQGVVEKGGELRVEVADTNESKELLKFCRKFTVPLRAALRDAGVLANYETPKRPVVHVFFIAPGCCYTGYSYSNNNSPFYMGIPRLKFPADAPSRSTLKLEEAFHVFIPADEWDERLANGMWAVDLGACPGGWTYQLVKRNMWVYSVDNGPMAQSLMDTGQVTWLREDGFKFRPTRSNISWMVCDMVEKPAKVAALMAQWLVNGWCRETIFNLKLPMKKRYEEVSHNLAYIQAQLDEHGINAQIQARQLYHDREEVTVHVRRIWAAVGGRRDER.

S-adenosyl-L-methionine is bound by residues Ser188, Cys221 to Gly224, Asp240, Asp260, and Asp277. Lys306 (proton acceptor) is an active-site residue.

Belongs to the class I-like SAM-binding methyltransferase superfamily. RNA methyltransferase RlmE family. RlmM subfamily. In terms of assembly, monomer.

It localises to the cytoplasm. The catalysed reaction is cytidine(2498) in 23S rRNA + S-adenosyl-L-methionine = 2'-O-methylcytidine(2498) in 23S rRNA + S-adenosyl-L-homocysteine + H(+). Functionally, catalyzes the 2'-O-methylation at nucleotide C2498 in 23S rRNA. The chain is Ribosomal RNA large subunit methyltransferase M from Escherichia coli O139:H28 (strain E24377A / ETEC).